The sequence spans 188 residues: MTIKSDKWIKKMSQEYNMIEPFEAGQIKVSNNQKIVSYGTSSYGYDVRCADEFKIFTNINSSIVDPKNFNDKNFVDFKGDVCIIPPNSFALARTVEKFKIPRDTLVVCLGKSTYARCGIIVNVTPLEPEWEGYVTLEFSNTTPLPAKIYANEGVAQMLFFQSDEECETSYADKGGKYQGQVGVTLPKC.

Residues 111 to 116 (KSTYAR), 135 to 137 (TLE), Q156, Y170, and Q180 each bind dCTP. E137 (proton donor/acceptor) is an active-site residue.

The protein belongs to the dCTP deaminase family. In terms of assembly, homotrimer.

The enzyme catalyses dCTP + H2O + H(+) = dUTP + NH4(+). The protein operates within pyrimidine metabolism; dUMP biosynthesis; dUMP from dCTP (dUTP route): step 1/2. In terms of biological role, catalyzes the deamination of dCTP to dUTP. This chain is dCTP deaminase, found in Francisella philomiragia subsp. philomiragia (strain ATCC 25017 / CCUG 19701 / FSC 153 / O#319-036).